Consider the following 187-residue polypeptide: UPF0200 protein MA_4660 (187 aa).

9-16 (GMPASGKS) provides a ligand contact to ATP.

It belongs to the UPF0200 family.

In Methanosarcina acetivorans (strain ATCC 35395 / DSM 2834 / JCM 12185 / C2A), this protein is UPF0200 protein MA_4660.